The sequence spans 430 residues: MGYLFTSESVSEGHPDKVADQISDAVLDKLLAFDPSSKVACETLVTTGQVVLAGEVKTKAYVDLQRIAREVINRIGYTKSEYMFEGNSCGVFSAIHEQSADINRGVEREDPMNQGAGDQGMMFGYATNETENYMPLSLDLAHKLLMVLAEIRREGKVMTYLRPDAKSQVTIEYDDNGKPVRIDTIVVSTQHDEFVTPADSSKEAQLKADEEMLAKIRQDVIEILMPRVIAGIHNEEVLALFNDRIVYHVNPTGKFVIGGPHGDTGLTGRKIIVDTYGGKGAHGGGAFSGKDPSKVDRSAAYAARHIAKNMVAAGVADEMLVQVSYAIGVARPINIYVNTYGRSNVKLSDGEIAKKIDELFDLRPKAIEERLKLRNPIYEETASYGHMGREPKVVTKTYESMYHEAKTLEVELFTWEKLDYVDKIKEAFGL.

Position 14 (His14) interacts with ATP. Asp16 serves as a coordination point for Mg(2+). Residue Glu42 participates in K(+) binding. Residues Glu55 and Gln98 each coordinate L-methionine. The tract at residues 98-108 is flexible loop; it reads QSADINRGVER. ATP contacts are provided by residues 164-166, 254-255, Asp263, 269-270, Ala286, and Lys290; these read DAK, KF, and RK. An L-methionine-binding site is contributed by Asp263. Residue Lys294 coordinates L-methionine.

The protein belongs to the AdoMet synthase family. As to quaternary structure, homotetramer; dimer of dimers. Mg(2+) is required as a cofactor. The cofactor is K(+).

It localises to the cytoplasm. The catalysed reaction is L-methionine + ATP + H2O = S-adenosyl-L-methionine + phosphate + diphosphate. It functions in the pathway amino-acid biosynthesis; S-adenosyl-L-methionine biosynthesis; S-adenosyl-L-methionine from L-methionine: step 1/1. In terms of biological role, catalyzes the formation of S-adenosylmethionine (AdoMet) from methionine and ATP. The overall synthetic reaction is composed of two sequential steps, AdoMet formation and the subsequent tripolyphosphate hydrolysis which occurs prior to release of AdoMet from the enzyme. This chain is S-adenosylmethionine synthase, found in Phocaeicola vulgatus (strain ATCC 8482 / DSM 1447 / JCM 5826 / CCUG 4940 / NBRC 14291 / NCTC 11154) (Bacteroides vulgatus).